Consider the following 87-residue polypeptide: Small ribosomal subunit protein bS18B (87 aa).

The protein belongs to the bacterial ribosomal protein bS18 family. As to quaternary structure, part of the 30S ribosomal subunit. Forms a tight heterodimer with protein bS6.

Its function is as follows. Binds as a heterodimer with protein bS6 to the central domain of the 16S rRNA, where it helps stabilize the platform of the 30S subunit. The polypeptide is Small ribosomal subunit protein bS18B (Mycolicibacterium vanbaalenii (strain DSM 7251 / JCM 13017 / BCRC 16820 / KCTC 9966 / NRRL B-24157 / PYR-1) (Mycobacterium vanbaalenii)).